The following is a 483-amino-acid chain: Protein nucleotidyltransferase YdiU (483 aa).

8 residues coordinate ATP: G81, G83, R84, K103, D115, G116, R166, and R173. The Proton acceptor role is filled by D244. Mg(2+) is bound by residues N245 and D254. D254 contributes to the ATP binding site.

The protein belongs to the SELO family. The cofactor is Mg(2+). Mn(2+) serves as cofactor.

The catalysed reaction is L-seryl-[protein] + ATP = 3-O-(5'-adenylyl)-L-seryl-[protein] + diphosphate. It catalyses the reaction L-threonyl-[protein] + ATP = 3-O-(5'-adenylyl)-L-threonyl-[protein] + diphosphate. It carries out the reaction L-tyrosyl-[protein] + ATP = O-(5'-adenylyl)-L-tyrosyl-[protein] + diphosphate. The enzyme catalyses L-histidyl-[protein] + UTP = N(tele)-(5'-uridylyl)-L-histidyl-[protein] + diphosphate. The catalysed reaction is L-seryl-[protein] + UTP = O-(5'-uridylyl)-L-seryl-[protein] + diphosphate. It catalyses the reaction L-tyrosyl-[protein] + UTP = O-(5'-uridylyl)-L-tyrosyl-[protein] + diphosphate. In terms of biological role, nucleotidyltransferase involved in the post-translational modification of proteins. It can catalyze the addition of adenosine monophosphate (AMP) or uridine monophosphate (UMP) to a protein, resulting in modifications known as AMPylation and UMPylation. The sequence is that of Protein nucleotidyltransferase YdiU from Shewanella pealeana (strain ATCC 700345 / ANG-SQ1).